We begin with the raw amino-acid sequence, 353 residues long: Photosystem II protein D1 (353 aa).

T2 is modified (N-acetylthreonine). Position 2 is a phosphothreonine (T2). The next 3 helical transmembrane spans lie at 29–46 (YIGW…TATS), 118–133 (HFLL…EWEL), and 142–156 (WIAV…AATA). H118 provides a ligand contact to chlorophyll a. A pheophytin a-binding site is contributed by Y126. Residues D170 and E189 each coordinate [CaMn4O5] cluster. Residues 197–218 (FHMLGVAGVFGGSLFSAMHGSL) form a helical membrane-spanning segment. H198 contacts chlorophyll a. A quinone-binding positions include H215 and 264–265 (SF). H215 lines the Fe cation pocket. H272 contributes to the Fe cation binding site. The helical transmembrane segment at 274–288 (FLAAWPVVGIWFTAL) threads the bilayer. [CaMn4O5] cluster-binding residues include H332, E333, D342, and A344. Positions 345–353 (AVEANSIDG) are excised as a propeptide.

It belongs to the reaction center PufL/M/PsbA/D family. PSII is composed of 1 copy each of membrane proteins PsbA, PsbB, PsbC, PsbD, PsbE, PsbF, PsbH, PsbI, PsbJ, PsbK, PsbL, PsbM, PsbT, PsbX, PsbY, PsbZ, Psb30/Ycf12, at least 3 peripheral proteins of the oxygen-evolving complex and a large number of cofactors. It forms dimeric complexes. The D1/D2 heterodimer binds P680, chlorophylls that are the primary electron donor of PSII, and subsequent electron acceptors. It shares a non-heme iron and each subunit binds pheophytin, quinone, additional chlorophylls, carotenoids and lipids. D1 provides most of the ligands for the Mn4-Ca-O5 cluster of the oxygen-evolving complex (OEC). There is also a Cl(-1) ion associated with D1 and D2, which is required for oxygen evolution. The PSII complex binds additional chlorophylls, carotenoids and specific lipids. serves as cofactor. Tyr-161 forms a radical intermediate that is referred to as redox-active TyrZ, YZ or Y-Z. In terms of processing, C-terminally processed by CTPA; processing is essential to allow assembly of the oxygen-evolving complex and thus photosynthetic growth.

The protein localises to the plastid. Its subcellular location is the chloroplast thylakoid membrane. The enzyme catalyses 2 a plastoquinone + 4 hnu + 2 H2O = 2 a plastoquinol + O2. Photosystem II (PSII) is a light-driven water:plastoquinone oxidoreductase that uses light energy to abstract electrons from H(2)O, generating O(2) and a proton gradient subsequently used for ATP formation. It consists of a core antenna complex that captures photons, and an electron transfer chain that converts photonic excitation into a charge separation. The D1/D2 (PsbA/PsbD) reaction center heterodimer binds P680, the primary electron donor of PSII as well as several subsequent electron acceptors. This is Photosystem II protein D1 from Cryptomeria japonica (Japanese cedar).